The primary structure comprises 283 residues: 4-diphosphocytidyl-2-C-methyl-D-erythritol kinase (283 aa).

Lysine 10 is a catalytic residue. Residue 99–109 (PMGGGLGGGSS) coordinates ATP. Residue aspartate 141 is part of the active site.

The protein belongs to the GHMP kinase family. IspE subfamily. Homodimer.

The catalysed reaction is 4-CDP-2-C-methyl-D-erythritol + ATP = 4-CDP-2-C-methyl-D-erythritol 2-phosphate + ADP + H(+). The protein operates within isoprenoid biosynthesis; isopentenyl diphosphate biosynthesis via DXP pathway; isopentenyl diphosphate from 1-deoxy-D-xylulose 5-phosphate: step 3/6. Functionally, catalyzes the phosphorylation of the position 2 hydroxy group of 4-diphosphocytidyl-2C-methyl-D-erythritol. This Escherichia coli O7:K1 (strain IAI39 / ExPEC) protein is 4-diphosphocytidyl-2-C-methyl-D-erythritol kinase.